Here is a 931-residue protein sequence, read N- to C-terminus: Aftiphilin (931 aa).

The interval 1 to 49 (MEPDIIRMYSSSPPPLDNGAEDDEEDEFGEFGGFSEVSPSGVGFVDFDT) is disordered. Positions 19–29 (GAEDDEEDEFG) are enriched in acidic residues. Residues 28–31 (FGEF) carry the WXXF motif 1 motif. Residues 33-45 (GFSEVSPSGVGFV) show a composition bias toward low complexity. Ser-151 is modified (phosphoserine). Over residues 371–381 (SVKTSDVNEIG) the composition is skewed to polar residues. The disordered stretch occupies residues 371-454 (SVKTSDVNEI…PFVTSTQDSM (84 aa)). Ser-395 is subject to Phosphoserine. The WXXF motif 2 motif lies at 433–436 (FGDF). A compositionally biased stretch (polar residues) spans 439 to 454 (ANGTTPPFVTSTQDSM). Residues 476–479 (FGEF) carry the WXXF motif 3 motif. 2 disordered regions span residues 494–561 (TESD…SSAG) and 599–636 (WQSQ…LQEP). Residues 516-530 (GGKDSKPDSKLKNGQ) show a composition bias toward basic and acidic residues. Thr-613 carries the phosphothreonine modification. Low complexity predominate over residues 618–631 (SVSSAASKGAVASG). A CLTCL1/Clathrin-binding motif is present at residues 712 to 714 (YQW). A clathrin-binding region spans residues 821–825 (LLNLD).

Self-associates. Interacts with GGA1 (via GAE domain). Interacts with GGA3 (via GAE domain), AP1G1 (via GAE domain) and AP1G2 (via GAE domain). Component of the aftiphilin/p200/gamma-synergin complex, at least composed of AFTPH/aftiphilin, HEATR5B/p200a and SYNRG/gamma-synergin, which plays a role in the AP1G1/AP-1-mediated protein trafficking from early to recycling endosomes. Within the complex interacts with HEATR5B/p200a and SYNRG/gamma-synergin; the interactions are direct. Interacts with AP1G1/AP-1; the interaction is required to recruit AFTPH/aftiphilin to the perinuclear region of the cell. Interacts with CLTCL1/Clathrin.

The protein resides in the cytoplasm. It is found in the perinuclear region. The protein localises to the cytoplasmic vesicle. Its subcellular location is the clathrin-coated vesicle. In terms of biological role, component of clathrin-coated vesicles. Component of the aftiphilin/p200/gamma-synergin complex, which plays roles in AP1G1/AP-1-mediated protein trafficking including the trafficking of transferrin from early to recycling endosomes, and the membrane trafficking of furin and the lysosomal enzyme cathepsin D between the trans-Golgi network (TGN) and endosomes. The protein is Aftiphilin (Aftph) of Mus musculus (Mouse).